The following is a 71-amino-acid chain: Probable ribosome maturation protein RlbA (71 aa).

One can recognise an S4 RNA-binding domain in the interval 12-69; that stretch reads ITLGQFLKLADVIQSGGMAKWFLSEHEVLVNDEPDNRRGRKLYVGDVVEIEGFGSFQV.

In terms of biological role, may assist in the assembly of the 50S subunit. This chain is Probable ribosome maturation protein RlbA, found in Bacillus subtilis (strain 168).